A 507-amino-acid chain; its full sequence is Cytochrome P450 4A14 (507 aa).

A propeptide spans 1 to 4 (removed in mature form); sequence MGFS. Glu318 provides a ligand contact to heme. The residue at position 437 (Ser437) is a Phosphoserine. Cys454 contacts heme.

Belongs to the cytochrome P450 family. The cofactor is heme.

The protein localises to the endoplasmic reticulum membrane. The protein resides in the microsome membrane. It carries out the reaction an omega-methyl-long-chain fatty acid + reduced [NADPH--hemoprotein reductase] + O2 = an omega-hydroxy-long-chain fatty acid + oxidized [NADPH--hemoprotein reductase] + H2O + H(+). The enzyme catalyses dodecanoate + reduced [NADPH--hemoprotein reductase] + O2 = (11R)-hydroxydodecanoate + oxidized [NADPH--hemoprotein reductase] + H2O + H(+). It catalyses the reaction dodecanoate + reduced [NADPH--hemoprotein reductase] + O2 = 12-hydroxydodecanoate + oxidized [NADPH--hemoprotein reductase] + H2O + H(+). The catalysed reaction is tetradecanoate + reduced [NADPH--hemoprotein reductase] + O2 = 14-hydroxytetradecanoate + oxidized [NADPH--hemoprotein reductase] + H2O + H(+). Its pathway is lipid metabolism; fatty acid metabolism. Its function is as follows. A cytochrome P450 monooxygenase that catalyzes omega and omega-1 hydroxylation of saturated fatty acids. Exhibits preferential omega versus omega-1 regioselectivity and (R) versus (S) stereoselectivity for hydroxylation of dodecanoic (lauric) acid. Mechanistically, uses molecular oxygen inserting one oxygen atom into a substrate, and reducing the second into a water molecule, with two electrons provided by NADPH via cytochrome P450 reductase (CPR; NADPH-ferrihemoprotein reductase). This chain is Cytochrome P450 4A14, found in Rattus norvegicus (Rat).